A 688-amino-acid chain; its full sequence is Potassium-transporting ATPase ATP-binding subunit (688 aa).

The next 4 helical transmembrane spans lie at 35 to 55, 62 to 82, 219 to 239, and 260 to 280; these read VMFVVYLGSGLTTILWIAMLA, ALFTGNIALWLWFTVLFANFA, IALTILLTALTIIFLLVCVTL, and VLIALLVCLIPTTIGGLLSAI. The active-site 4-aspartylphosphate intermediate is Asp-313. ATP contacts are provided by residues Asp-350, Glu-354, 383–390, and Lys-401; that span reads FSAMTRMS. Mg(2+) is bound by residues Asp-524 and Asp-528. 3 helical membrane passes run 594–614, 622–642, and 667–687; these read FAIIPAAFAVTYPQLNILNIM, AVLSTVIFNALIIVFLIPLAL, and GLIAPFIGIKLIDLLLTLLIL.

The protein belongs to the cation transport ATPase (P-type) (TC 3.A.3) family. Type IA subfamily. The system is composed of three essential subunits: KdpA, KdpB and KdpC.

The protein localises to the cell inner membrane. It carries out the reaction K(+)(out) + ATP + H2O = K(+)(in) + ADP + phosphate + H(+). Functionally, part of the high-affinity ATP-driven potassium transport (or Kdp) system, which catalyzes the hydrolysis of ATP coupled with the electrogenic transport of potassium into the cytoplasm. This subunit is responsible for energy coupling to the transport system and for the release of the potassium ions to the cytoplasm. This Photorhabdus laumondii subsp. laumondii (strain DSM 15139 / CIP 105565 / TT01) (Photorhabdus luminescens subsp. laumondii) protein is Potassium-transporting ATPase ATP-binding subunit.